Here is a 156-residue protein sequence, read N- to C-terminus: Ribonuclease H (156 aa).

Residues 2–144 (SQFDVTVFTD…CDVLARAQAS (143 aa)) form the RNase H type-1 domain. Residues Asp-11, Glu-49, Asp-71, and Asp-136 each contribute to the Mg(2+) site.

It belongs to the RNase H family. In terms of assembly, monomer. Mg(2+) serves as cofactor.

The protein resides in the cytoplasm. It carries out the reaction Endonucleolytic cleavage to 5'-phosphomonoester.. Its function is as follows. Endonuclease that specifically degrades the RNA of RNA-DNA hybrids. The sequence is that of Ribonuclease H from Nitratidesulfovibrio vulgaris (strain ATCC 29579 / DSM 644 / CCUG 34227 / NCIMB 8303 / VKM B-1760 / Hildenborough) (Desulfovibrio vulgaris).